Consider the following 187-residue polypeptide: UPF0301 protein Ppha_2142 (187 aa).

It belongs to the UPF0301 (AlgH) family.

This chain is UPF0301 protein Ppha_2142, found in Pelodictyon phaeoclathratiforme (strain DSM 5477 / BU-1).